The primary structure comprises 112 residues: Nitrogen regulatory protein P-II (112 aa).

Tyr51 is subject to O-UMP-tyrosine.

This sequence belongs to the P(II) protein family. In terms of assembly, homotrimer.

In terms of biological role, in nitrogen-limiting conditions, when the ratio of Gln to 2-ketoglutarate decreases, P-II is uridylylated to P-II-UMP. P-II-UMP allows the deadenylation of glutamine synthetase (GS), thus activating the enzyme. Conversely, in nitrogen excess P-II is deuridylated and promotes the adenylation of GS. P-II indirectly controls the transcription of the GS gene (glnA). P-II prevents NR-II-catalyzed conversion of NR-I to NR-I-phosphate, the transcriptional activator of glnA. When P-II is uridylylated to P-II-UMP, these events are reversed. The chain is Nitrogen regulatory protein P-II (glnB) from Azospirillum brasilense.